A 316-amino-acid polypeptide reads, in one-letter code: Ribosomal RNA small subunit methyltransferase H (316 aa).

S-adenosyl-L-methionine-binding positions include 35 to 37 (AGH), Asp55, Phe84, Asp105, and Gln112.

This sequence belongs to the methyltransferase superfamily. RsmH family.

The protein localises to the cytoplasm. The enzyme catalyses cytidine(1402) in 16S rRNA + S-adenosyl-L-methionine = N(4)-methylcytidine(1402) in 16S rRNA + S-adenosyl-L-homocysteine + H(+). Its function is as follows. Specifically methylates the N4 position of cytidine in position 1402 (C1402) of 16S rRNA. In Streptococcus mutans serotype c (strain ATCC 700610 / UA159), this protein is Ribosomal RNA small subunit methyltransferase H.